Reading from the N-terminus, the 290-residue chain is Thymidylate synthase (290 aa).

Residues Arg-27 and 152–153 each bind dUMP; that span reads RR. Cys-172 serves as the catalytic Nucleophile. DUMP contacts are provided by residues 192–195, Asn-203, and 233–235; these read RSAD and HVY. Asp-195 serves as a coordination point for (6R)-5,10-methylene-5,6,7,8-tetrahydrofolate. Ala-289 is a binding site for (6R)-5,10-methylene-5,6,7,8-tetrahydrofolate.

Belongs to the thymidylate synthase family. In terms of assembly, homodimer.

It carries out the reaction dUMP + (6R)-5,10-methylene-5,6,7,8-tetrahydrofolate = 7,8-dihydrofolate + dTMP. It functions in the pathway pyrimidine metabolism; dTTP biosynthesis. The chain is Thymidylate synthase (TS) from Ateles.